We begin with the raw amino-acid sequence, 153 residues long: Movement protein (153 aa).

Disordered regions lie at residues 1 to 24 and 121 to 153; these read MAQEGGAVEQFGQWLWSNPIEQDP and PWVATLIPSQSAGPPQRSSEPKRLTGRNSRNQR. The span at 121–138 shows a compositional bias: polar residues; sequence PWVATLIPSQSAGPPQRS.

This sequence belongs to the luteoviruses movement protein family.

Its function is as follows. Transports viral genome to neighboring plant cells directly through plasmosdesmata, without any budding. The movement protein allows efficient cell to cell propagation, by bypassing the host cell wall barrier. The chain is Movement protein from Avena byzantina (Oat).